The chain runs to 145 residues: Superoxide dismutase [Mn/Fe] (145 aa).

Residues His-10 and His-64 each contribute to the Fe(3+) site. The Mn(2+) site is built by His-10 and His-64.

This sequence belongs to the iron/manganese superoxide dismutase family. Requires Mn(2+) as cofactor. Fe(3+) serves as cofactor.

The enzyme catalyses 2 superoxide + 2 H(+) = H2O2 + O2. Destroys superoxide anion radicals which are normally produced within the cells and which are toxic to biological systems. Catalyzes the dismutation of superoxide anion radicals into O2 and H2O2 by successive reduction and oxidation of the transition metal ion at the active site. The protein is Superoxide dismutase [Mn/Fe] (sodA) of Streptococcus canis.